Consider the following 126-residue polypeptide: Ejaculatory bulb-specific protein 3 (126 aa).

A signal peptide spans 1–17; it reads MKMILALVVLGLVLVAA.

Belongs to the insect A10/OS-D protein family. In terms of tissue distribution, specifically expressed in the ejaculatory bulb and seminal fluid.

It is found in the secreted. Protein component of the posterior mating plug. In Drosophila melanogaster (Fruit fly), this protein is Ejaculatory bulb-specific protein 3.